Consider the following 194-residue polypeptide: Protein LURP-one-related 10 (194 aa).

It belongs to the LOR family.

In terms of biological role, might be related to the phospholipid scramblase and tubby-like superfamily of membrane tethered transcription factors. The chain is Protein LURP-one-related 10 from Arabidopsis thaliana (Mouse-ear cress).